Here is a 529-residue protein sequence, read N- to C-terminus: Snake venom 5'-nucleotidase (529 aa).

A signal peptide is located at residue Gly1. Positions 12 and 14 each coordinate Zn(2+). An intrachain disulfide couples Cys27 to Cys32. Zn(2+) is bound by residues Asp60, Asn92, His195, and His218. 2 N-linked (GlcNAc...) asparagine glycosylation sites follow: Asn308 and Asn322. Intrachain disulfides connect Cys328–Cys333 and Cys340–Cys362. Position 329 (Arg329) interacts with AMP. AMP-binding residues include Asn365, Arg370, and Phe393. A disulfide bridge links Cys452 with Cys455. Phe476 and Asp482 together coordinate AMP. Ser525 carries GPI-anchor amidated serine lipidation. Positions 526-529 (AGSL) are cleaved as a propeptide — removed in mature form.

The protein belongs to the 5'-nucleotidase family. It depends on Zn(2+) as a cofactor. Post-translationally, venom 5'-nucleotidases (or a part thereof) may be released into the venom via exosome-like vesicles. They may be attached via a GPI anchor to the membrane of these vesicles. Soluble forms of 5'-nucleotidase might be released by cleavage of the ectodomain in the exosome-like vesicles or venom gland cells. In terms of tissue distribution, expressed by the venom gland.

It is found in the membrane. The catalysed reaction is a ribonucleoside 5'-phosphate + H2O = a ribonucleoside + phosphate. In terms of biological role, hydrolyzes nucleotides into nucleosides. Snake venom 5'-nucleotidases are widely distributed among venomous snake taxa, but there is a lack of information about their biological activities. They have been shown to inhibit platelet aggregation. This effect may be due to the liberation of inhibitory AMP or adenosine by its action on ADP released upon initiation of aggregation. Venom 5'-nucleotidases are also known to synergistically act in vivo with other toxins like ADPases, phospholipases, and disintegrins to exert a more pronounced anti-coagulant effect. The polypeptide is Snake venom 5'-nucleotidase (Naja atra (Chinese cobra)).